The primary structure comprises 247 residues: MKAVILIPARLDSSRLDRKMLADLEGEPLIVRTWRQALKSRLAEKVVVATDSREIAAVLDACGAEVVMTSPTASCGTERIAEAARHIEGDVFVNLQGDEPLISPENIDLALEPFFSENPPDCSTLVLPLRPDDHVQIEDPHQVKVVMDAKGFALYFSRSAIPFQRNMRPTTIVYRHIGLYAFSADVLQKFASLPPSMLEEAESLEQLRLLENGFRIQCVTTLVDNPGVNTVEDLEQVRRIIRSSLPG.

It belongs to the KdsB family.

It localises to the cytoplasm. The catalysed reaction is 3-deoxy-alpha-D-manno-oct-2-ulosonate + CTP = CMP-3-deoxy-beta-D-manno-octulosonate + diphosphate. The protein operates within nucleotide-sugar biosynthesis; CMP-3-deoxy-D-manno-octulosonate biosynthesis; CMP-3-deoxy-D-manno-octulosonate from 3-deoxy-D-manno-octulosonate and CTP: step 1/1. Its pathway is bacterial outer membrane biogenesis; lipopolysaccharide biosynthesis. Functionally, activates KDO (a required 8-carbon sugar) for incorporation into bacterial lipopolysaccharide in Gram-negative bacteria. The sequence is that of 3-deoxy-manno-octulosonate cytidylyltransferase from Pelodictyon phaeoclathratiforme (strain DSM 5477 / BU-1).